Here is a 319-residue protein sequence, read N- to C-terminus: Putative GPI-anchor transamidase (319 aa).

An N-terminal signal peptide occupies residues 1–16 (MRHVLLIFCAIIATEA). Active-site residues include His156 and Cys198. The N-linked (GlcNAc...) asparagine glycan is linked to Asn257.

The protein belongs to the peptidase C13 family.

It functions in the pathway glycolipid biosynthesis; glycosylphosphatidylinositol-anchor biosynthesis. Functionally, mediates GPI anchoring in the endoplasmic reticulum, by replacing a protein's C-terminal GPI attachment signal peptide with a pre-assembled GPI. During this transamidation reaction, the GPI transamidase forms a carbonyl intermediate with the substrate protein. This Caenorhabditis elegans protein is Putative GPI-anchor transamidase.